The chain runs to 788 residues: LPS-assembly protein LptD (788 aa).

Residues 1–24 form the signal peptide; that stretch reads MKKRFPTLLATLIWTALYSQHTLA.

This sequence belongs to the LptD family. As to quaternary structure, component of the lipopolysaccharide transport and assembly complex. Interacts with LptE and LptA.

It is found in the cell outer membrane. Its function is as follows. Together with LptE, is involved in the assembly of lipopolysaccharide (LPS) at the surface of the outer membrane. The protein is LPS-assembly protein LptD of Yersinia enterocolitica serotype O:8 / biotype 1B (strain NCTC 13174 / 8081).